The chain runs to 87 residues: Small ribosomal subunit protein uS15c (87 aa).

This sequence belongs to the universal ribosomal protein uS15 family. As to quaternary structure, part of the 30S ribosomal subunit.

The protein localises to the plastid. Its subcellular location is the chloroplast. The chain is Small ribosomal subunit protein uS15c (rps15) from Solanum tuberosum (Potato).